The chain runs to 124 residues: Small ribosomal subunit protein uS12 (124 aa).

Residues 1–28 (MPTINQLVRKGRTPKVSKTKAPALKGSP) form a disordered region. The segment covering 9 to 18 (RKGRTPKVSK) has biased composition (basic residues). Residue Asp-89 is modified to 3-methylthioaspartic acid.

It belongs to the universal ribosomal protein uS12 family. As to quaternary structure, part of the 30S ribosomal subunit. Contacts proteins S8 and S17. May interact with IF1 in the 30S initiation complex.

Functionally, with S4 and S5 plays an important role in translational accuracy. Interacts with and stabilizes bases of the 16S rRNA that are involved in tRNA selection in the A site and with the mRNA backbone. Located at the interface of the 30S and 50S subunits, it traverses the body of the 30S subunit contacting proteins on the other side and probably holding the rRNA structure together. The combined cluster of proteins S8, S12 and S17 appears to hold together the shoulder and platform of the 30S subunit. The protein is Small ribosomal subunit protein uS12 of Paenarthrobacter aurescens (strain TC1).